A 556-amino-acid polypeptide reads, in one-letter code: Oxygen-dependent choline dehydrogenase (556 aa).

Asp-4–Glu-33 lines the FAD pocket. Residue His-473 is the Proton acceptor of the active site.

Belongs to the GMC oxidoreductase family. The cofactor is FAD.

It catalyses the reaction choline + A = betaine aldehyde + AH2. The catalysed reaction is betaine aldehyde + NAD(+) + H2O = glycine betaine + NADH + 2 H(+). It functions in the pathway amine and polyamine biosynthesis; betaine biosynthesis via choline pathway; betaine aldehyde from choline (cytochrome c reductase route): step 1/1. Involved in the biosynthesis of the osmoprotectant glycine betaine. Catalyzes the oxidation of choline to betaine aldehyde and betaine aldehyde to glycine betaine at the same rate. This is Oxygen-dependent choline dehydrogenase from Escherichia coli O6:K15:H31 (strain 536 / UPEC).